A 192-amino-acid chain; its full sequence is Ribosome maturation factor RimP (192 aa).

Belongs to the RimP family.

Its subcellular location is the cytoplasm. Functionally, required for maturation of 30S ribosomal subunits. This Mycobacterium sp. (strain JLS) protein is Ribosome maturation factor RimP.